Here is a 340-residue protein sequence, read N- to C-terminus: Fructoselysine 6-phosphate deglycase (340 aa).

2 SIS domains span residues 35–169 and 201–331; these read IVEE…RLAP and LGEL…PDER.

As to quaternary structure, homododecamer.

The catalysed reaction is N(6)-(6-phospho-D-fructosyl)-L-lysine + H2O = D-glucose 6-phosphate + L-lysine. Its pathway is carbohydrate metabolism; fructoselysine degradation; D-glucose 6-phosphate and lysine from fructoselysine: step 2/2. Catalyzes the reversible conversion of fructoselysine 6-phosphate to glucose 6-phosphate and lysine. Functions in a fructoselysine degradation pathway that allows E.coli to grow on fructoselysine or psicoselysine. The sequence is that of Fructoselysine 6-phosphate deglycase (frlB) from Escherichia coli O157:H7.